Reading from the N-terminus, the 492-residue chain is N-succinylglutamate 5-semialdehyde dehydrogenase (492 aa).

Residue 220–225 coordinates NAD(+); it reads GSANTG. Catalysis depends on residues E243 and C277.

Belongs to the aldehyde dehydrogenase family. AstD subfamily.

It catalyses the reaction N-succinyl-L-glutamate 5-semialdehyde + NAD(+) + H2O = N-succinyl-L-glutamate + NADH + 2 H(+). It participates in amino-acid degradation; L-arginine degradation via AST pathway; L-glutamate and succinate from L-arginine: step 4/5. Catalyzes the NAD-dependent reduction of succinylglutamate semialdehyde into succinylglutamate. This is N-succinylglutamate 5-semialdehyde dehydrogenase from Escherichia coli O7:K1 (strain IAI39 / ExPEC).